We begin with the raw amino-acid sequence, 650 residues long: Macrolide export ATP-binding/permease protein MacB (650 aa).

The region spanning 2–238 is the ABC transporter domain; the sequence is IDIKGIRKSY…PTTAQEKRQE (237 aa). ATP is bound at residue 38–45; that stretch reads GPSGSGKS. Transmembrane regions (helical) follow at residues 267–287, 531–551, 580–600, and 610–630; these read GLSMLGILIGVAAVVGMLALG, IAAISLVVGGIGIMNIMLVSV, IVVSVCGGLLGIALGVGFSLL, and VVSAGSVILSFGFSALIGIVF.

It belongs to the ABC transporter superfamily. Macrolide exporter (TC 3.A.1.122) family. In terms of assembly, homodimer.

It is found in the cell inner membrane. In terms of biological role, non-canonical ABC transporter that contains transmembrane domains (TMD), which form a pore in the inner membrane, and an ATP-binding domain (NBD), which is responsible for energy generation. Confers resistance against macrolides. The protein is Macrolide export ATP-binding/permease protein MacB of Bdellovibrio bacteriovorus (strain ATCC 15356 / DSM 50701 / NCIMB 9529 / HD100).